The following is a 543-amino-acid chain: CTP synthase (543 aa).

The amidoligase domain stretch occupies residues 1–265; sequence MARYIFITGG…DDEVLAAFGI (265 aa). S13 provides a ligand contact to CTP. Position 13 (S13) interacts with UTP. 14-19 contacts ATP; it reads SLGKGL. Y54 provides a ligand contact to L-glutamine. Position 71 (D71) interacts with ATP. Residues D71 and E139 each coordinate Mg(2+). Residues 146 to 148, 186 to 191, and K222 contribute to the CTP site; these read DIE and KTKPTQ. UTP-binding positions include 186–191 and K222; that span reads KTKPTQ. Position 238–240 (238–240) interacts with ATP; sequence RDV. A Glutamine amidotransferase type-1 domain is found at 291-542; that stretch reads TIAIVGKYTG…VQAAVVQSRL (252 aa). G353 contacts L-glutamine. The active-site Nucleophile; for glutamine hydrolysis is the C380. Residues 381-384, E404, and R470 each bind L-glutamine; that span reads FGMQ. Residues H515 and E517 contribute to the active site.

It belongs to the CTP synthase family. In terms of assembly, homotetramer.

It carries out the reaction UTP + L-glutamine + ATP + H2O = CTP + L-glutamate + ADP + phosphate + 2 H(+). The enzyme catalyses L-glutamine + H2O = L-glutamate + NH4(+). It catalyses the reaction UTP + NH4(+) + ATP = CTP + ADP + phosphate + 2 H(+). It participates in pyrimidine metabolism; CTP biosynthesis via de novo pathway; CTP from UDP: step 2/2. Allosterically activated by GTP, when glutamine is the substrate; GTP has no effect on the reaction when ammonia is the substrate. The allosteric effector GTP functions by stabilizing the protein conformation that binds the tetrahedral intermediate(s) formed during glutamine hydrolysis. Inhibited by the product CTP, via allosteric rather than competitive inhibition. Its function is as follows. Catalyzes the ATP-dependent amination of UTP to CTP with either L-glutamine or ammonia as the source of nitrogen. Regulates intracellular CTP levels through interactions with the four ribonucleotide triphosphates. The chain is CTP synthase from Rhodopseudomonas palustris (strain BisB18).